The primary structure comprises 198 residues: ATP synthase subunit b (198 aa).

The helical transmembrane segment at 49–67 (IWKWANFLILAGGLGYLVG) threads the bilayer.

This sequence belongs to the ATPase B chain family. F-type ATPases have 2 components, F(1) - the catalytic core - and F(0) - the membrane proton channel. F(1) has five subunits: alpha(3), beta(3), gamma(1), delta(1), epsilon(1). F(0) has three main subunits: a(1), b(2) and c(10-14). The alpha and beta chains form an alternating ring which encloses part of the gamma chain. F(1) is attached to F(0) by a central stalk formed by the gamma and epsilon chains, while a peripheral stalk is formed by the delta and b chains.

It is found in the cell inner membrane. In terms of biological role, f(1)F(0) ATP synthase produces ATP from ADP in the presence of a proton or sodium gradient. F-type ATPases consist of two structural domains, F(1) containing the extramembraneous catalytic core and F(0) containing the membrane proton channel, linked together by a central stalk and a peripheral stalk. During catalysis, ATP synthesis in the catalytic domain of F(1) is coupled via a rotary mechanism of the central stalk subunits to proton translocation. Its function is as follows. Component of the F(0) channel, it forms part of the peripheral stalk, linking F(1) to F(0). This Solibacter usitatus (strain Ellin6076) protein is ATP synthase subunit b.